A 310-amino-acid chain; its full sequence is Signal peptidase I (310 aa).

Residues 5–25 form a helical membrane-spanning segment; sequence LSSFLLASSLITGTLWIINKI. Residues 26 to 57 are Cytoplasmic-facing; sequence LSHNLLDSKIPFNIKKSKIYYKSKQVVQTFAS. The helical transmembrane segment at 58–78 threads the bilayer; sequence FFPILIIVFIIRTFICEPFQI. The Extracellular portion of the chain corresponds to 79-310; the sequence is PSESMMPTLL…IQFDRIGNIY (232 aa). Catalysis depends on residues serine 82 and lysine 137.

This sequence belongs to the peptidase S26 family.

The protein resides in the cell membrane. It carries out the reaction Cleavage of hydrophobic, N-terminal signal or leader sequences from secreted and periplasmic proteins.. This Buchnera aphidicola subsp. Baizongia pistaciae (strain Bp) protein is Signal peptidase I (lepB).